The following is a 202-amino-acid chain: Endothelin-1 (202 aa).

The N-terminal stretch at 1–25 (MDYFPMIFALLFVAFQGAPEAAVLG) is a signal peptide. Positions 26–50 (TELSAGAEDGGEKPAPATPWRPRRS) are excised as a propeptide. 2 disulfide bridges follow: Cys53–Cys67 and Cys55–Cys63. Positions 74 to 202 (VNTPEHVVPY…DKKVIYNRAH (129 aa)) are excised as a propeptide. The interval 110 to 124 (CQCASQTDKKCWNFC) is endothelin-like.

The protein belongs to the endothelin/sarafotoxin family.

The protein localises to the secreted. In terms of biological role, endothelins are endothelium-derived vasoconstrictor peptides. Probable ligand for G-protein coupled receptors EDNRA and EDNRB which activates PTK2B, BCAR1, BCAR3 and, GTPases RAP1 and RHOA cascade in glomerular mesangial cells. Also binds the DEAR/FBXW7-AS1 receptor. Promotes mesenteric arterial wall remodeling via activation of ROCK signaling and subsequent colocalization of NFATC3 with F-actin filaments. NFATC3 then translocates to the nucleus where it subsequently promotes the transcription of the smooth muscle hypertrophy and differentiation marker ACTA2. The sequence is that of Endothelin-1 (EDN1) from Bos taurus (Bovine).